The following is a 330-amino-acid chain: uncharacterized protein (330 aa).

To H.influenzae HI_0461.

This is an uncharacterized protein from Escherichia coli (strain K12).